A 357-amino-acid chain; its full sequence is MSEEPTVSPPSPEQPAAQPAKPARPAARRAPRKPATRRPRVASPAQKAREEIQAISQKPVALQVASAPHGSSEDSTSASLPANYPYHTRMRRNEYEKAKHDLQIELLKVQSWVKETGQRVVVLFEGRDAAGKGGTIKRFMEHLNPRGARIVALEKPSSQEQGQWYFQRYIQHLPTAGEMVFFDRSWYNRAGVERVMGFCSPLQYLEFMRQAPELERMLTNSGILLFKYWFSVSREEQLRRFISRRDDPLKHWKLSPIDIKSLDKWDDYTAAKQAMFFHTDTADAPWTVIKSDDKKRARLNCIRHFLHSLDYPDKDRRIAHEPDPLLVGPASRVIEEDEKVYAEAAAAPGHANLDIPA.

The interval 1–83 (MSEEPTVSPP…DSTSASLPAN (83 aa)) is disordered. Residues 14 to 25 (QPAAQPAKPARP) are compositionally biased toward low complexity. Positions 26–40 (AARRAPRKPATRRPR) are enriched in basic residues.

Belongs to the polyphosphate kinase 2 (PPK2) family. Class I subfamily. Homotetramer. Also forms octamers. The cofactor is Mg(2+). Mn(2+) is required as a cofactor.

The catalysed reaction is [phosphate](n) + GTP = [phosphate](n+1) + GDP. The enzyme catalyses [phosphate](n) + ATP = [phosphate](n+1) + ADP. Uses inorganic polyphosphate (polyP) as a donor to convert GDP to GTP and ADP to ATP. Shows a preference for GDP. Can also catalyze the synthesis of polyP from GTP or ATP, but the rate of polyP utilization is 75-fold greater than the rate of polyP synthesis. This Pseudomonas aeruginosa (strain ATCC 15692 / DSM 22644 / CIP 104116 / JCM 14847 / LMG 12228 / 1C / PRS 101 / PAO1) protein is GDP-polyphosphate phosphotransferase.